Reading from the N-terminus, the 418-residue chain is Queuine tRNA-ribosyltransferase accessory subunit 2 (418 aa).

Positions 325, 327, 330, and 356 each coordinate Zn(2+).

Belongs to the queuine tRNA-ribosyltransferase family. QTRT2 subfamily. In terms of assembly, heterodimer of a catalytic subunit and an accessory subunit. Zn(2+) is required as a cofactor.

It localises to the cytoplasm. Non-catalytic subunit of the queuine tRNA-ribosyltransferase (TGT) that catalyzes the base-exchange of a guanine (G) residue with queuine (Q) at position 34 (anticodon wobble position) in tRNAs with GU(N) anticodons (tRNA-Asp, -Asn, -His and -Tyr), resulting in the hypermodified nucleoside queuosine (7-(((4,5-cis-dihydroxy-2-cyclopenten-1-yl)amino)methyl)-7-deazaguanosine). The chain is Queuine tRNA-ribosyltransferase accessory subunit 2 from Drosophila sechellia (Fruit fly).